We begin with the raw amino-acid sequence, 360 residues long: Dual-specificity RNA methyltransferase RlmN (360 aa).

The Proton acceptor role is filled by Glu89. The region spanning 95-330 (DSGRGTLCVS…TRVTRGQDID (236 aa)) is the Radical SAM core domain. The cysteines at positions 102 and 333 are disulfide-linked. Positions 109, 113, and 116 each coordinate [4Fe-4S] cluster. Residues 159–160 (GE), Ser191, 213–215 (SLH), and Asn290 each bind S-adenosyl-L-methionine. Cys333 acts as the S-methylcysteine intermediate in catalysis.

This sequence belongs to the radical SAM superfamily. RlmN family. The cofactor is [4Fe-4S] cluster.

The protein resides in the cytoplasm. The enzyme catalyses adenosine(2503) in 23S rRNA + 2 reduced [2Fe-2S]-[ferredoxin] + 2 S-adenosyl-L-methionine = 2-methyladenosine(2503) in 23S rRNA + 5'-deoxyadenosine + L-methionine + 2 oxidized [2Fe-2S]-[ferredoxin] + S-adenosyl-L-homocysteine. It carries out the reaction adenosine(37) in tRNA + 2 reduced [2Fe-2S]-[ferredoxin] + 2 S-adenosyl-L-methionine = 2-methyladenosine(37) in tRNA + 5'-deoxyadenosine + L-methionine + 2 oxidized [2Fe-2S]-[ferredoxin] + S-adenosyl-L-homocysteine. Specifically methylates position 2 of adenine 2503 in 23S rRNA and position 2 of adenine 37 in tRNAs. m2A2503 modification seems to play a crucial role in the proofreading step occurring at the peptidyl transferase center and thus would serve to optimize ribosomal fidelity. The polypeptide is Dual-specificity RNA methyltransferase RlmN (Alkalilimnicola ehrlichii (strain ATCC BAA-1101 / DSM 17681 / MLHE-1)).